The sequence spans 189 residues: UPF0398 protein LVIS_0849 (189 aa).

It belongs to the UPF0398 family.

The protein is UPF0398 protein LVIS_0849 of Levilactobacillus brevis (strain ATCC 367 / BCRC 12310 / CIP 105137 / JCM 1170 / LMG 11437 / NCIMB 947 / NCTC 947) (Lactobacillus brevis).